A 479-amino-acid polypeptide reads, in one-letter code: MASSYKMSEQSTISEHILQKTCDHLILTDRSGLKAESAAEEMKQTAENQGNTVHWAALLIFAVIIPTIGGNILVILAVSLEKRLQYATNYFLMSLAVADLLVGLFVMPIALLTIMFEATWPLPLALCPAWLFLDVLFSTASIMHLCAISLDRYIAIKKPIQANQCNSRTTAFVKITVVWLISIGIAIPVPIKGIEADVVNAHNITCELTKDRFGSFMLFGSLAAFFAPLTIMIVTYFLTIHALRKKAYLVRNRPPQRLTRWTVSTVLQREDSSFSSPEKMVMLDGSHKDKILPNSTDETLMRRMSSAGKKPAQTISNEQRASKVLGIVFLFFLLMWCPFFITNVTLALCDSCNQTTLKTLLQIFVWVGYVSSGVNPLIYTLFNKTFREAFGRYITCNYQATKSVKVLRKCSSTLYFGNSMVENSKFFTKHGIRNGINPAMYQSPVRLRSSTIQSSSIILLNTFLTENDGDKVEDQVSYI.

Residues 1 to 55 lie on the Extracellular side of the membrane; that stretch reads MASSYKMSEQSTISEHILQKTCDHLILTDRSGLKAESAAEEMKQTAENQGNTVHW. A helical membrane pass occupies residues 56 to 78; that stretch reads AALLIFAVIIPTIGGNILVILAV. Over 79 to 89 the chain is Cytoplasmic; the sequence is SLEKRLQYATN. The helical transmembrane segment at 90–112 threads the bilayer; sequence YFLMSLAVADLLVGLFVMPIALL. The Extracellular segment spans residues 113–128; sequence TIMFEATWPLPLALCP. An intrachain disulfide couples Cys127 to Cys206. The chain crosses the membrane as a helical span at residues 129-150; that stretch reads AWLFLDVLFSTASIMHLCAISL. Ergotamine is bound by residues Asp134 and Thr139. The DRY motif; important for ligand-induced conformation changes motif lies at 151 to 153; the sequence is DRY. Topologically, residues 151–170 are cytoplasmic; it reads DRYIAIKKPIQANQCNSRTT. The helical transmembrane segment at 171–191 threads the bilayer; it reads AFVKITVVWLISIGIAIPVPI. Over 192–215 the chain is Extracellular; the sequence is KGIEADVVNAHNITCELTKDRFGS. N-linked (GlcNAc...) asparagine glycosylation occurs at Asn203. Leu208 is a binding site for ergotamine. The short motif at 211–214 is the [DE]RFG motif; may stabilize a conformation that preferentially activates signaling via beta-arrestin family members element; it reads DRFG. Residues 216-238 traverse the membrane as a helical segment; the sequence is FMLFGSLAAFFAPLTIMIVTYFL. Topologically, residues 239 to 323 are cytoplasmic; sequence TIHALRKKAY…TISNEQRASK (85 aa). A helical transmembrane segment spans residues 324–344; it reads VLGIVFLFFLLMWCPFFITNV. Over 345-359 the chain is Extracellular; it reads TLALCDSCNQTTLKT. An intrachain disulfide couples Cys349 to Cys352. A glycan (N-linked (GlcNAc...) asparagine) is linked at Asn353. The chain crosses the membrane as a helical span at residues 360–381; sequence LLQIFVWVGYVSSGVNPLIYTL. The NPxxY motif; important for ligand-induced conformation changes and signaling motif lies at 375 to 379; the sequence is NPLIY. The Cytoplasmic portion of the chain corresponds to 382 to 479; that stretch reads FNKTFREAFG…DKVEDQVSYI (98 aa). Residue Cys396 is the site of S-palmitoyl cysteine attachment. The PDZ-binding motif lies at 477-479; sequence SYI.

The protein belongs to the G-protein coupled receptor 1 family. As to quaternary structure, interacts (via C-terminus) with MPDZ. In terms of tissue distribution, stomach fundus.

It localises to the cell membrane. It is found in the synapse. The protein localises to the synaptosome. Its function is as follows. G-protein coupled receptor for 5-hydroxytryptamine (serotonin). Also functions as a receptor for various ergot alkaloid derivatives and psychoactive substances. Ligand binding causes a conformation change that triggers signaling via guanine nucleotide-binding proteins (G proteins) and modulates the activity of downstream effectors. HTR2B is coupled to G(q)/G(11) G alpha proteins and activates phospholipase C-beta, releasing diacylglycerol (DAG) and inositol 1,4,5-trisphosphate (IP3) second messengers that modulate the activity of phosphatidylinositol 3-kinase and promote the release of Ca(2+) ions from intracellular stores, respectively. Beta-arrestin family members inhibit signaling via G proteins and mediate activation of alternative signaling pathways. Plays a role in the regulation of dopamine and 5-hydroxytryptamine release, 5-hydroxytryptamine uptake and in the regulation of extracellular dopamine and 5-hydroxytryptamine levels, and thereby affects neural activity. May play a role in the perception of pain. Plays a role in the regulation of behavior, including impulsive behavior. Required for normal proliferation of embryonic cardiac myocytes and normal heart development. Protects cardiomyocytes against apoptosis. Plays a role in the adaptation of pulmonary arteries to chronic hypoxia. Plays a role in vasoconstriction. Required for normal osteoblast function and proliferation, and for maintaining normal bone density. Required for normal proliferation of the interstitial cells of Cajal in the intestine. The chain is 5-hydroxytryptamine receptor 2B (Htr2b) from Rattus norvegicus (Rat).